Here is a 73-residue protein sequence, read N- to C-terminus: Large ribosomal subunit protein bL31 (73 aa).

Zn(2+) is bound by residues C16, C18, C36, and C39.

The protein belongs to the bacterial ribosomal protein bL31 family. Type A subfamily. Part of the 50S ribosomal subunit. Requires Zn(2+) as cofactor.

Its function is as follows. Binds the 23S rRNA. This is Large ribosomal subunit protein bL31 from Desulfosudis oleivorans (strain DSM 6200 / JCM 39069 / Hxd3) (Desulfococcus oleovorans).